We begin with the raw amino-acid sequence, 231 residues long: NADH-ubiquinone oxidoreductase chain 4 (231 aa).

The next 6 helical transmembrane spans lie at Pro-1–Ile-21, Thr-34–Leu-54, Ser-61–Ile-80, Trp-84–Leu-106, Ile-118–Leu-138, and Leu-156–Leu-178.

The protein belongs to the complex I subunit 4 family.

Its subcellular location is the mitochondrion membrane. It catalyses the reaction a ubiquinone + NADH + 5 H(+)(in) = a ubiquinol + NAD(+) + 4 H(+)(out). Its function is as follows. Core subunit of the mitochondrial membrane respiratory chain NADH dehydrogenase (Complex I) that is believed to belong to the minimal assembly required for catalysis. Complex I functions in the transfer of electrons from NADH to the respiratory chain. The immediate electron acceptor for the enzyme is believed to be ubiquinone. The chain is NADH-ubiquinone oxidoreductase chain 4 (MT-ND4) from Trimeresurus albolabris (White-lipped pit viper).